We begin with the raw amino-acid sequence, 318 residues long: Aspartate carbamoyltransferase catalytic subunit (318 aa).

Carbamoyl phosphate is bound by residues R62 and T63. K90 contributes to the L-aspartate binding site. 3 residues coordinate carbamoyl phosphate: R112, H140, and Q143. L-aspartate-binding residues include R173 and R227. Carbamoyl phosphate contacts are provided by G268 and P269.

This sequence belongs to the aspartate/ornithine carbamoyltransferase superfamily. ATCase family. As to quaternary structure, heterododecamer (2C3:3R2) of six catalytic PyrB chains organized as two trimers (C3), and six regulatory PyrI chains organized as three dimers (R2).

It catalyses the reaction carbamoyl phosphate + L-aspartate = N-carbamoyl-L-aspartate + phosphate + H(+). The protein operates within pyrimidine metabolism; UMP biosynthesis via de novo pathway; (S)-dihydroorotate from bicarbonate: step 2/3. Functionally, catalyzes the condensation of carbamoyl phosphate and aspartate to form carbamoyl aspartate and inorganic phosphate, the committed step in the de novo pyrimidine nucleotide biosynthesis pathway. The protein is Aspartate carbamoyltransferase catalytic subunit of Desulfotalea psychrophila (strain LSv54 / DSM 12343).